A 69-amino-acid chain; its full sequence is uncharacterized protein (69 aa).

The disordered stretch occupies residues 22–48 (LFRKSRELSPIKPVRTPTPPAPTPPPM). Residues 37–48 (TPTPPAPTPPPM) show a composition bias toward pro residues.

This is an uncharacterized protein from Lepidoptera (butterflies and moths).